We begin with the raw amino-acid sequence, 318 residues long: Ribose-phosphate pyrophosphokinase (318 aa).

ATP contacts are provided by residues 40 to 42 (DGE) and 99 to 100 (RQ). 2 residues coordinate Mg(2+): H134 and D173. K196 is a catalytic residue. D-ribose 5-phosphate contacts are provided by residues R198, D222, and 226–230 (DTAGT).

This sequence belongs to the ribose-phosphate pyrophosphokinase family. Class I subfamily. Homohexamer. The cofactor is Mg(2+).

It is found in the cytoplasm. The enzyme catalyses D-ribose 5-phosphate + ATP = 5-phospho-alpha-D-ribose 1-diphosphate + AMP + H(+). It functions in the pathway metabolic intermediate biosynthesis; 5-phospho-alpha-D-ribose 1-diphosphate biosynthesis; 5-phospho-alpha-D-ribose 1-diphosphate from D-ribose 5-phosphate (route I): step 1/1. In terms of biological role, involved in the biosynthesis of the central metabolite phospho-alpha-D-ribosyl-1-pyrophosphate (PRPP) via the transfer of pyrophosphoryl group from ATP to 1-hydroxyl of ribose-5-phosphate (Rib-5-P). The sequence is that of Ribose-phosphate pyrophosphokinase from Burkholderia pseudomallei (strain K96243).